The primary structure comprises 344 residues: Uroporphyrinogen decarboxylase (344 aa).

Residues 23-27, D73, Y149, T204, and H321 each bind substrate; that span reads RQAGR.

Belongs to the uroporphyrinogen decarboxylase family. As to quaternary structure, homodimer.

Its subcellular location is the cytoplasm. It carries out the reaction uroporphyrinogen III + 4 H(+) = coproporphyrinogen III + 4 CO2. It functions in the pathway porphyrin-containing compound metabolism; protoporphyrin-IX biosynthesis; coproporphyrinogen-III from 5-aminolevulinate: step 4/4. Its function is as follows. Catalyzes the decarboxylation of four acetate groups of uroporphyrinogen-III to yield coproporphyrinogen-III. In Francisella tularensis subsp. holarctica (strain LVS), this protein is Uroporphyrinogen decarboxylase.